The primary structure comprises 765 residues: Probable beta-glucosidase M (765 aa).

A signal peptide spans 1–19 (MHSISALLSLLGGLALSSA). Residues Asn24, Asn71, Asn93, Asn126, and Asn258 are each glycosylated (N-linked (GlcNAc...) asparagine). The active site involves Asp286. Residues Asn314, Asn321, Asn432, Asn519, Asn541, and Asn647 are each glycosylated (N-linked (GlcNAc...) asparagine).

The protein belongs to the glycosyl hydrolase 3 family.

It localises to the secreted. It catalyses the reaction Hydrolysis of terminal, non-reducing beta-D-glucosyl residues with release of beta-D-glucose.. It participates in glycan metabolism; cellulose degradation. Beta-glucosidases are one of a number of cellulolytic enzymes involved in the degradation of cellulosic biomass. Catalyzes the last step releasing glucose from the inhibitory cellobiose. The chain is Probable beta-glucosidase M (bglM) from Aspergillus niger (strain ATCC MYA-4892 / CBS 513.88 / FGSC A1513).